A 228-amino-acid chain; its full sequence is MDEEAAIDRLPLDLLAYIFSLATSFTVLAQASGVCKKWRKAVNQSMARRETLSFAGWKMDDDSTSRLVHLAFNLKELDISRSRWGCHITDNGLYQIASARCVSNLNSVSLWGMTAITDSGVVQLISRTSSLQHLNIGGTFITDESLFAIAERCHQLKTIGMWCCRHVTERGLLVLVNKCRKLESINLWGTRVPVDCFIALLTISPALQIKPMELLLNAQNPPPLLHAV.

The 48-residue stretch at Glu-4–Thr-51 folds into the F-box domain.

This chain is F-box protein At5g67140, found in Arabidopsis thaliana (Mouse-ear cress).